The primary structure comprises 722 residues: Pre-B-cell leukemia transcription factor-interacting protein 1 (722 aa).

Over residues 1 to 10 (MASCPDSDNS) the composition is skewed to polar residues. Positions 1–180 (MASCPDSDNS…TAAVDGEDQA (180 aa)) are disordered. The span at 88–97 (DDGHGTKRPG) shows a compositional bias: basic and acidic residues. 4 positions are modified to phosphoserine: Ser-133, Ser-144, Ser-145, and Ser-146. The residue at position 150 (Thr-150) is a Phosphothreonine. At Ser-166 the chain carries Phosphoserine. Coiled coils occupy residues 266–346 (LLLD…RGVD) and 373–401 (DTSLLEQHKQLEAEAKALRQELQKQWQLL). Residues 442-453 (QGINTGRSSNDS) are compositionally biased toward polar residues. Disordered stretches follow at residues 442–562 (QGIN…SPDS) and 691–722 (RRSKKKEKQPWNHRAVGPREEHSRHPHHYHQG). Basic and acidic residues-rich tracts occupy residues 465 to 536 (HPRE…DPKV) and 546 to 559 (SGERQKHSWGKDNS). Positions 482-502 (QKAEHWKLKKEESGQDRKKSW) match the Nuclear localization signal motif. The residue at position 559 (Ser-559) is a Phosphoserine. A Nuclear localization signal motif is present at residues 686-711 (DKALKRRSKKKEKQPWNHRAVGPREE).

As to quaternary structure, interacts with ESR1, PBX1, PBX2 and PBX3. Interacts with TEX11.

It is found in the cytoplasm. The protein resides in the cytoskeleton. The protein localises to the nucleus. Regulator of pre-B-cell leukemia transcription factors (BPXs) function. Inhibits the binding of PBX1-HOX complex to DNA and blocks the transcriptional activity of E2A-PBX1. Tethers estrogen receptor-alpha (ESR1) to microtubules and allows them to influence estrogen receptors-alpha signaling. In Rattus norvegicus (Rat), this protein is Pre-B-cell leukemia transcription factor-interacting protein 1 (Pbxip1).